Here is a 433-residue protein sequence, read N- to C-terminus: Oxaloacetate decarboxylase beta chain 2 (433 aa).

The next 9 helical transmembrane spans lie at 13 to 35 (LMHLGAGQAIMLLVSLLLLWLAI), 42 to 64 (LLLLPIGFGGLLSNIPEAGLALT), 125 to 147 (LFYKVAIGSGVAPLVIFMGVGAM), 160 to 182 (LLLGAAAQFGIFATVLGALTLNY), 214 to 236 (LAPELLGAIAVAAYSYMALVPLI), 266 to 288 (ILFPVVLLMLVALLLPDAAPLLG), 308 to 327 (TVQNGLINIVTIFLGLSVGA), 339 to 361 (TLGILLLGVIAFGIGTAAGVLMA), and 413 to 432 (VAGVIGSAIAAGVMLKYVLA).

Belongs to the GcdB/MmdB/OadB family. In terms of assembly, heterotrimer of an alpha, a beta and a gamma subunit. The cofactor is Na(+).

The protein localises to the cell membrane. It catalyses the reaction oxaloacetate + 2 Na(+)(in) + H(+) = pyruvate + 2 Na(+)(out) + CO2. In terms of biological role, catalyzes the decarboxylation of oxaloacetate coupled to Na(+) translocation. The chain is Oxaloacetate decarboxylase beta chain 2 (oadB2) from Salmonella typhimurium (strain LT2 / SGSC1412 / ATCC 700720).